Here is a 71-residue protein sequence, read N- to C-terminus: Paralithocin 2 (71 aa).

An N-terminal signal peptide occupies residues 1–23; that stretch reads MGAAKVLLVVLAVMVAVPNLAEG. Cystine bridges form between C29/C58, C34/C54, C39/C52, and C44/C55. R70 carries the post-translational modification Arginine amide; partial.

This sequence belongs to the paralithocin family. The amidated form is probably the active form.

Its function is as follows. Has antibacterial activity, mainly against marine Gram-positive bacteria like C.maltaromaticum (MIC=50 uM), C.mobile (MIC=50 uM), C.divergens (MIC=50 uM) and C.funditum (MIC=25 uM) but also against C.glutamicum (MIC=12.5 uM). Has very little or no activity against Gram-negative bacteria. The sequence is that of Paralithocin 2 from Paralithodes camtschaticus (Red king crab).